The following is a 175-amino-acid chain: Bacterial proteasome activator (175 aa).

A disordered region spans residues 152-175 (LPPGIQVPGAQRGGATHPGTGQYL). The HbYX motif signature appears at 173–175 (QYL).

Belongs to the Bpa family. As to quaternary structure, forms a homooligomeric, either hexameric or heptameric, ring-like structure which stacks co-axially with the proteasomal alpha-rings.

Its function is as follows. Interacts with the core proteasome alpha-subunit (PrcA) through its C-terminal hydrophobic-tyrosine-X motif (HbYX motif). Interaction of Bpa with the proteasome stimulates proteasomal peptidase and casein degradation activity, which suggests Bpa could play a role in the removal of non-native or damaged proteins by influencing the conformation of the proteasome complex upon interaction. The sequence is that of Bacterial proteasome activator from Mycolicibacterium smegmatis (strain ATCC 700084 / mc(2)155) (Mycobacterium smegmatis).